The primary structure comprises 413 residues: FAD-dependent monooxygenase vrtH (413 aa).

Residues 1–23 form the signal peptide; it reads MQRANHTRPVLIIGAGLSGLAIG. An N-linked (GlcNAc...) asparagine glycan is attached at Asn-5. Residues Glu-37 and Ala-48 each coordinate FAD. Asn-94 carries N-linked (GlcNAc...) asparagine glycosylation. Arg-120 lines the FAD pocket. A glycan (N-linked (GlcNAc...) asparagine) is linked at Asn-232. Residues Asp-327 and Gly-340 each coordinate FAD.

Belongs to the paxM FAD-dependent monooxygenase family. It depends on FAD as a cofactor.

It functions in the pathway secondary metabolite biosynthesis; terpenoid biosynthesis. Functionally, FAD-dependent monooxygenase; part of the gene cluster that mediates the biosynthesis of viridicatumtoxin, a tetracycline-like fungal meroterpenoid with a unique, fused spirobicyclic ring system. The first step of the pathway is the production of the malonamoyl-CoA starter unit for the polyketide synthase vrtA. The aldolase vrtJ may be involved in the synthesis of the malonamate substrate for malonamoyl-CoA synthetase vrtB. The polyketide synthase vrtA then may utilize the malonamoyl-CoA starter unit, followed by sequential condensation of eight malonyl-CoA units to form the polyketide backbone. The cyclization of the last ring could be mediated by the lactamase-like protein vrtG. The proposed post-PKS tailoring steps are a hydroxylation at C5 catalyzed the cytochrome P450 monooxygenase vrtE, a hydroxylation at C12a catalyzed by VrtH and/or VrtI, and an O-methylation by the O-methyltransferase vrtF. VrtC is then proposed to catalyze the transfer of a geranyl group synthesized by vrtD to the aromatic C ring of the tetracyclic polyketide intermediate of viridicatumtoxin to yield previridicatumtoxin. Finally, the cytochrome P450 monooxygenase vrtK catalyzes the spirocyclization of the geranyl moiety of previridicatumtoxin to afford viridicatumtoxin. This Penicillium aethiopicum protein is FAD-dependent monooxygenase vrtH.